A 177-amino-acid chain; its full sequence is Large ribosomal subunit protein uL6 (177 aa).

Residues 151–177 (KRPPEPYKGKGVKYADEHIRRKEGKKS) are disordered. The span at 152–177 (RPPEPYKGKGVKYADEHIRRKEGKKS) shows a compositional bias: basic and acidic residues.

The protein belongs to the universal ribosomal protein uL6 family. As to quaternary structure, part of the 50S ribosomal subunit.

Its function is as follows. This protein binds to the 23S rRNA, and is important in its secondary structure. It is located near the subunit interface in the base of the L7/L12 stalk, and near the tRNA binding site of the peptidyltransferase center. The polypeptide is Large ribosomal subunit protein uL6 (Fusobacterium nucleatum subsp. nucleatum (strain ATCC 25586 / DSM 15643 / BCRC 10681 / CIP 101130 / JCM 8532 / KCTC 2640 / LMG 13131 / VPI 4355)).